The chain runs to 161 residues: Phosphopantetheine adenylyltransferase (161 aa).

Residue S9 coordinates substrate. ATP-binding positions include 9–10 (SF) and H17. Substrate contacts are provided by K41, T73, and R87. Residues 88 to 90 (GLR), E98, and 123 to 129 (FAHISST) each bind ATP.

It belongs to the bacterial CoaD family. As to quaternary structure, homohexamer. Requires Mg(2+) as cofactor.

The protein resides in the cytoplasm. It catalyses the reaction (R)-4'-phosphopantetheine + ATP + H(+) = 3'-dephospho-CoA + diphosphate. The protein operates within cofactor biosynthesis; coenzyme A biosynthesis; CoA from (R)-pantothenate: step 4/5. Its function is as follows. Reversibly transfers an adenylyl group from ATP to 4'-phosphopantetheine, yielding dephospho-CoA (dPCoA) and pyrophosphate. This chain is Phosphopantetheine adenylyltransferase, found in Chloroflexus aggregans (strain MD-66 / DSM 9485).